We begin with the raw amino-acid sequence, 1224 residues long: Dynactin subunit 1 (1224 aa).

Basic residues predominate over residues 1–10 (MAQSRRHPHG). Positions 1–30 (MAQSRRHPHGRASSAGPRMSTEASSKPLKV) are disordered. A CAP-Gly domain is found at 49 to 91 (GATLXATGKWVGVILDEAKGKNDGTVQGRKYFTCEENHGIFVR). Disordered regions lie at residues 100–217 (DGAD…RSQV), 374–402 (SASE…RQQR), and 888–918 (PHCH…PPAE). The span at 117 to 146 (VPKRHSRXAAKGSKLRGAKPKKTTARRPKP) shows a compositional bias: basic residues. Over residues 148 to 180 (RTPTSAPSSGTAGPSGSASASGGEMSSSEPSTP) the composition is skewed to low complexity. Residues 205-540 (SPTKEEENLR…QEASAEKQQQ (336 aa)) are a coiled coil. A compositionally biased stretch (basic and acidic residues) spans 207–217 (TKEEENLRSQV). Coiled-coil stretches lie at residues 936–1042 (LKLE…EGLR) and 1081–1117 (KDSP…LELA). The disordered stretch occupies residues 1203–1224 (WCSSSRARASPPASACSPPRPS). Low complexity predominate over residues 1204-1224 (CSSSRARASPPASACSPPRPS).

This sequence belongs to the dynactin 150 kDa subunit family. As to quaternary structure, monomer and homodimer. Subunit of dynactin, a multiprotein complex part of a tripartite complex with dynein and a adapter, such as BICDL1, BICD2 or HOOK3. The dynactin complex is built around ACTR1A/ACTB filament and consists of an actin-related filament composed of a shoulder domain, a pointed end and a barbed end. Its length is defined by its flexible shoulder domain. The soulder is composed of 2 DCTN1 subunits, 4 DCTN2 and 2 DCTN3. DCTN1/p150(glued) binds directly to microtubules and to cytoplasmic dynein. As to expression, ubiquitously expressed.

The protein localises to the cytoplasm. It localises to the cytoskeleton. Its subcellular location is the microtubule organizing center. The protein resides in the centrosome. It is found in the centriole. The protein localises to the spindle. It localises to the cell cortex. Its function is as follows. Part of the dynactin complex that activates the molecular motor dynein for ultra-processive transport along microtubules. Plays a key role in dynein-mediated retrograde transport of vesicles and organelles along microtubules by recruiting and tethering dynein to microtubules. Binds to both dynein and microtubules providing a link between specific cargos, microtubules and dynein. Essential for targeting dynein to microtubule plus ends, recruiting dynein to membranous cargos and enhancing dynein processivity (the ability to move along a microtubule for a long distance without falling off the track). Can also act as a brake to slow the dynein motor during motility along the microtubule. Can regulate microtubule stability by promoting microtubule formation, nucleation and polymerization and by inhibiting microtubule catastrophe in neurons. Inhibits microtubule catastrophe by binding both to microtubules and to tubulin, leading to enhanced microtubule stability along the axon. Plays a role in metaphase spindle orientation. Plays a role in centriole cohesion and subdistal appendage organization and function. Its recruitment to the centriole in a KIF3A-dependent manner is essential for the maintenance of centriole cohesion and the formation of subdistal appendage. Also required for microtubule anchoring at the mother centriole. Plays a role in primary cilia formation. This is Dynactin subunit 1 (DCTN1) from Gallus gallus (Chicken).